The chain runs to 830 residues: GPI ethanolamine phosphate transferase 2 (830 aa).

An N-terminal signal peptide occupies residues 1-32 (MNLKQFTCLSCAQLLAILLFIFAFFPRKIVLT). The Lumenal portion of the chain corresponds to 33 to 321 (GISKQDPDQD…QYLETVQQID (289 aa)). Residues Asn-145, Asn-185, and Asn-298 are each glycosylated (N-linked (GlcNAc...) asparagine). The chain crosses the membrane as a helical span at residues 322 to 342 (IVPTIAALFGMPIPMNSVGII). At 343–405 (IPDFLQLLPN…TKSATNYNYP (63 aa)) the chain is on the cytoplasmic side. A helical membrane pass occupies residues 406–426 (LLTLAFVGFLIITIIAIYVLL). Residues 427–439 (RYSGPDFWQLRVS) lie on the Lumenal side of the membrane. Residues 440-460 (SLSVLLVSIILGVSTFASSFI) traverse the membrane as a helical segment. Over 461–469 (EEEHQLWWW) the chain is Cytoplasmic. The chain crosses the membrane as a helical span at residues 470 to 490 (IVTAFSAVPLFVYRLNVLIIV). At 491 to 533 (RWFIMMACVRSIKFWNNSGQKFIYSNVMSNLLNQNPSWKWCLN) the chain is on the lumenal side. Asn-506 carries an N-linked (GlcNAc...) asparagine glycan. The chain crosses the membrane as a helical span at residues 534–554 (MLTFLVLIMASAGFQVLHFIV). Over 555 to 598 (TTILVGLCFTYKISWEIVNGNQAEIPLFMHDLLAKIDFAPTESN) the chain is Cytoplasmic. Residues 599–619 (LIVLARVFFQAWAIVVISRLV) traverse the membrane as a helical segment. The Lumenal portion of the chain corresponds to 620–651 (LTKLKVLNKNYLIKDMKVYITILLMFQTSSQN). A helical membrane pass occupies residues 652–672 (IGQFLVFQILESQIFYFFQNI). Topologically, residues 673–682 (PTASLTSTSK) are cytoplasmic. A helical transmembrane segment spans residues 683-703 (IYFSNLVSLILQNFTFFQFGG). The Lumenal portion of the chain corresponds to 704–724 (TNSISTIDLGNAYHGVSSDYN). The chain crosses the membrane as a helical span at residues 725–745 (IYVVGILMSVANFAPAIYWSM). Topologically, residues 746–768 (LPWSINYASIPAQVKLQTFIRSK) are cytoplasmic. A helical transmembrane segment spans residues 769 to 789 (LPAFTYHCIFGTCLMTACVVL). The Lumenal portion of the chain corresponds to 790–805 (RFHLFIWSVFSPKLCY). A helical membrane pass occupies residues 806-826 (FLGWNFVMGLLNGWLPELALL). At 827–830 (CALD) the chain is on the cytoplasmic side.

This sequence belongs to the PIGG/PIGN/PIGO family. PIGG subfamily. N-glycosylated.

The protein resides in the endoplasmic reticulum membrane. The protein operates within glycolipid biosynthesis; glycosylphosphatidylinositol-anchor biosynthesis. Ethanolamine phosphate transferase involved in glycosylphosphatidylinositol-anchor biosynthesis. Transfers ethanolamine phosphate to the GPI second mannose. Although not essential, addition of ethanolamine phosphate to the second mannose plays an important role in cell separation via the GPI-based modification of daughter-specific proteins. This Saccharomyces cerevisiae (strain ATCC 204508 / S288c) (Baker's yeast) protein is GPI ethanolamine phosphate transferase 2 (LAS21).